A 555-amino-acid polypeptide reads, in one-letter code: Hydroxylamine reductase (555 aa).

Positions 3, 6, 18, and 25 each coordinate [4Fe-4S] cluster. Positions 252, 276, 320, 407, 435, 460, 494, and 496 each coordinate hybrid [4Fe-2O-2S] cluster. Cys-407 carries the cysteine persulfide modification.

Belongs to the HCP family. The cofactor is [4Fe-4S] cluster. Hybrid [4Fe-2O-2S] cluster is required as a cofactor.

It localises to the cytoplasm. It catalyses the reaction A + NH4(+) + H2O = hydroxylamine + AH2 + H(+). In terms of biological role, catalyzes the reduction of hydroxylamine to form NH(3) and H(2)O. The chain is Hydroxylamine reductase from Burkholderia ambifaria (strain MC40-6).